A 449-amino-acid chain; its full sequence is Adenylosuccinate synthetase (449 aa).

GTP contacts are provided by residues 12–18 (GDEGKGK) and 40–42 (GHT). Residue aspartate 13 is the Proton acceptor of the active site. Residues aspartate 13 and glycine 40 each coordinate Mg(2+). Residues 13-16 (DEGK), 38-41 (NAGH), threonine 128, arginine 142, glutamine 223, threonine 238, and arginine 302 each bind IMP. Residue histidine 41 is the Proton donor of the active site. 298-304 (TTTGRRR) is a binding site for substrate. Residues arginine 304, 330–332 (KLD), and 412–414 (SLG) contribute to the GTP site.

The protein belongs to the adenylosuccinate synthetase family. In terms of assembly, homodimer. The cofactor is Mg(2+).

The protein localises to the cytoplasm. It carries out the reaction IMP + L-aspartate + GTP = N(6)-(1,2-dicarboxyethyl)-AMP + GDP + phosphate + 2 H(+). The protein operates within purine metabolism; AMP biosynthesis via de novo pathway; AMP from IMP: step 1/2. Its function is as follows. Plays an important role in the de novo pathway of purine nucleotide biosynthesis. Catalyzes the first committed step in the biosynthesis of AMP from IMP. This chain is Adenylosuccinate synthetase, found in Gloeothece citriformis (strain PCC 7424) (Cyanothece sp. (strain PCC 7424)).